The chain runs to 88 residues: Small ribosomal subunit protein bS20 (88 aa).

This sequence belongs to the bacterial ribosomal protein bS20 family.

Functionally, binds directly to 16S ribosomal RNA. In Bartonella henselae (strain ATCC 49882 / DSM 28221 / CCUG 30454 / Houston 1) (Rochalimaea henselae), this protein is Small ribosomal subunit protein bS20.